The sequence spans 389 residues: S-adenosylmethionine synthase (389 aa).

His-19 lines the ATP pocket. Residue Asp-21 coordinates Mg(2+). Glu-47 provides a ligand contact to K(+). The L-methionine site is built by Glu-60 and Gln-103. The interval 103–113 (QSVDIAQGVSR) is flexible loop. ATP-binding positions include 168 to 170 (DGK), 234 to 235 (RF), Asp-243, 249 to 250 (RK), Ala-266, and Lys-270. Asp-243 contacts L-methionine. Lys-274 contacts L-methionine.

It belongs to the AdoMet synthase family. In terms of assembly, homotetramer; dimer of dimers. Mg(2+) serves as cofactor. The cofactor is K(+).

Its subcellular location is the cytoplasm. It carries out the reaction L-methionine + ATP + H2O = S-adenosyl-L-methionine + phosphate + diphosphate. It participates in amino-acid biosynthesis; S-adenosyl-L-methionine biosynthesis; S-adenosyl-L-methionine from L-methionine: step 1/1. Functionally, catalyzes the formation of S-adenosylmethionine (AdoMet) from methionine and ATP. The overall synthetic reaction is composed of two sequential steps, AdoMet formation and the subsequent tripolyphosphate hydrolysis which occurs prior to release of AdoMet from the enzyme. This Solidesulfovibrio magneticus (strain ATCC 700980 / DSM 13731 / RS-1) (Desulfovibrio magneticus) protein is S-adenosylmethionine synthase.